The following is a 457-amino-acid chain: Glycine receptor subunit alpha-1 (457 aa).

Positions 1-28 (MYSFNTLRLYLWETIVFFSLAASKEAEA) are cleaved as a signal peptide. Topologically, residues 29-250 (ARSAPKPMSP…RFHLERQMGY (222 aa)) are extracellular. Residue Asn-66 is glycosylated (N-linked (GlcNAc...) asparagine). Arg-93 and Ser-157 together coordinate glycine. Residues Cys-166 and Cys-180 are joined by a disulfide bond. Residues Glu-220 and Asp-222 each coordinate Zn(2+). The cysteines at positions 226 and 237 are disulfide-linked. 230–235 (YNTGKF) serves as a coordination point for strychnine. Thr-232 is a glycine binding site. Zn(2+) is bound at residue His-243. The helical transmembrane segment at 251 to 272 (YLIQMYIPSLLIVILSWISFWI) threads the bilayer. The Cytoplasmic portion of the chain corresponds to 273–277 (NMDAA). Residues 278–298 (PARVGLGITTVLTMTTQSSGS) form a helical membrane-spanning segment. The Extracellular segment spans residues 299-309 (RASLPKVSYVK). A helical membrane pass occupies residues 310–330 (AIDIWMAVCLLFVFSALLEYA). At 331 to 425 (AVNFVSRQHK…FIQRAKKIDK (95 aa)) the chain is on the cytoplasmic side. The interval 391-410 (KGANNSNTTNPPPAPSKSPE) is disordered. The chain crosses the membrane as a helical span at residues 426-446 (ISRIGFPMAFLIFNMFYWIIY). Topologically, residues 447 to 457 (KIVRREDVHNQ) are extracellular.

Belongs to the ligand-gated ion channel (TC 1.A.9) family. Glycine receptor (TC 1.A.9.3) subfamily. GLRA1 sub-subfamily. Interacts with GLRB to form heteropentameric channels; this is probably the predominant form in vivo. Heteropentamer composed of four GLRA1 subunits and one GLRB subunit. Heteropentamer composed of two GLRA1 and three GLRB. Heteropentamer composed of three GLRA1 and two GLRB. Homopentamer (in vitro). Both homopentamers and heteropentamers form functional ion channels, but their characteristics are subtly different.

It is found in the postsynaptic cell membrane. It localises to the synapse. Its subcellular location is the perikaryon. The protein localises to the cell projection. The protein resides in the dendrite. It is found in the cell membrane. It catalyses the reaction chloride(in) = chloride(out). Its activity is regulated as follows. Channel opening is triggered by extracellular glycine. Channel characteristics depend on the subunit composition; heteropentameric channels are activated by lower glycine levels and display faster desensitization. Channel opening is also triggered by taurine and beta-alanine. Channel activity is potentiated by nanomolar concentrations of Zn(2+); half-maximal activation is observed with 37 nM Zn(2+). Inhibited by higher Zn(2+) levels; haf-maximal inhibition occurs at 20 uM Zn(2+). Inhibited by strychnine. Strychnine binding locks the channel in a closed conformation and prevents channel opening in response to extracellular glycine. Inhibited by lindane. Inhibited by picrotoxin. Its function is as follows. Subunit of heteromeric glycine-gated chloride channels. Plays an important role in the down-regulation of neuronal excitability. Contributes to the generation of inhibitory postsynaptic currents. Channel activity is potentiated by ethanol. Potentiation of channel activity by intoxicating levels of ethanol contribute to the sedative effects of ethanol. In Homo sapiens (Human), this protein is Glycine receptor subunit alpha-1 (GLRA1).